Here is a 704-residue protein sequence, read N- to C-terminus: MLKLFSAFRKDKIWDFDGGIHPPEMKTQSNGTPLRQVPLAPRFVIPLKQHIGAEGELCVSVGDRVLRGQALTRGRGRMLPVHAPTSGTVIAIAPHSTAHPSALAELSVIIDADGEDRWIEREGWSDYRAHSREALIERIHQYGVAGLGGAGFPTGVKLQGGGDKITTLIINAAECEPYITADDRLMQDCAAQIVEGIRILAHILQPREVLIGIEDNKPQAISMLRAVLADAHDISLRVIPTKYPSGGAKQLTQILTGKQVPHGGRSSDIGVLMQNVGTAYAVKRAVVDGEPITERVVTLTGEAVSRPGNVWARLGTPVRHLLNDAGFCPSADQMVIMGGPLMGFTLPWLDVPVVKITNCLLAPSVAEMGAPQEEKSCIRCSACADACPADLLPQQLYWFSKGQQHDKATAHHIADCIECGACAWVCPSNIPLVQYFRQEKAEINAIRLEEKRAAEAKARFEARQARLEREKAARLARHKSAAVQPAAKDQDAIAAALARVKEKQAQATQPVVIQAGSQPDNSAVIAAREARKAQARAKQAAHPMADSAIPGNDPSKAAVEAAIARAKARKQEQQAGSEPVEAVDPRKAAVEAAIARAKARKQEQQTGSEPAEPIDPRKAAVEAAIVRAKARKQEQQTGSEPAEPIDPRKAAVEAAIARAKARKQEQQTGSEPAEPADPRKAAVAAAIARVQAKKAAQQQVVNED.

4Fe-4S ferredoxin-type domains follow at residues 368 to 397 and 407 to 436; these read MGAPQEEKSCIRCSACADACPADLLPQQLY and KATAHHIADCIECGACAWVCPSNIPLVQYF. [4Fe-4S] cluster contacts are provided by C377, C380, C383, C387, C416, C419, C422, and C426. Residues 536–685 are disordered; that stretch reads RAKQAAHPMA…ADPRKAAVAA (150 aa). Positions 556–565 are enriched in low complexity; the sequence is KAAVEAAIAR.

This sequence belongs to the 4Fe4S bacterial-type ferredoxin family. RnfC subfamily. In terms of assembly, the complex is composed of six subunits: RsxA, RsxB, RsxC, RsxD, RsxE and RsxG. It depends on [4Fe-4S] cluster as a cofactor.

It localises to the cell inner membrane. In terms of biological role, part of a membrane-bound complex that couples electron transfer with translocation of ions across the membrane. Required to maintain the reduced state of SoxR. In Salmonella dublin (strain CT_02021853), this protein is Ion-translocating oxidoreductase complex subunit C.